A 463-amino-acid polypeptide reads, in one-letter code: Vicilin (463 aa).

The N-terminal stretch at 1-27 (MAATTLKDSFPLLTLLGIAFLASVCLS) is a signal peptide. A Cupin type-1 1 domain is found at 35–194 (PFVFESNRFQ…SFNTDYKEIE (160 aa)). Residues 235-257 (LNKNAKSSSKKSTSSESEPFNLR) form a disordered region. Residues 238–252 (NAKSSSKKSTSSESE) show a composition bias toward low complexity. A Cupin type-1 2 domain is found at 254 to 426 (FNLRSREPIY…AFPGSAQEVD (173 aa)).

This sequence belongs to the 7S seed storage protein family.

It is found in the vacuole. It localises to the aleurone grain. Seed storage protein. This Vicia faba (Broad bean) protein is Vicilin.